The chain runs to 151 residues: Putative pre-16S rRNA nuclease (151 aa).

The protein belongs to the YqgF nuclease family.

The protein localises to the cytoplasm. In terms of biological role, could be a nuclease involved in processing of the 5'-end of pre-16S rRNA. The sequence is that of Putative pre-16S rRNA nuclease from Neisseria meningitidis serogroup B (strain ATCC BAA-335 / MC58).